Consider the following 85-residue polypeptide: Small ribosomal subunit protein bS16c (85 aa).

Belongs to the bacterial ribosomal protein bS16 family.

Its subcellular location is the plastid. The protein localises to the chloroplast. This chain is Small ribosomal subunit protein bS16c, found in Saccharum hybrid (Sugarcane).